The sequence spans 127 residues: uncharacterized protein (127 aa).

The 127-residue stretch at 1–127 (MKIVVTSIFV…CGNLIQIVQK (127 aa)) folds into the VOC domain.

The protein belongs to the glyoxalase I family.

This is an uncharacterized protein from Bacillus subtilis (strain 168).